The sequence spans 306 residues: Ribonuclease Z (306 aa).

Residues His-63, His-65, Asp-67, His-68, His-140, Asp-211, and His-269 each contribute to the Zn(2+) site. The active-site Proton acceptor is Asp-67.

Belongs to the RNase Z family. As to quaternary structure, homodimer. Zn(2+) is required as a cofactor.

It carries out the reaction Endonucleolytic cleavage of RNA, removing extra 3' nucleotides from tRNA precursor, generating 3' termini of tRNAs. A 3'-hydroxy group is left at the tRNA terminus and a 5'-phosphoryl group is left at the trailer molecule.. Its function is as follows. Zinc phosphodiesterase, which displays some tRNA 3'-processing endonuclease activity. Probably involved in tRNA maturation, by removing a 3'-trailer from precursor tRNA. The polypeptide is Ribonuclease Z (Listeria innocua serovar 6a (strain ATCC BAA-680 / CLIP 11262)).